The primary structure comprises 353 residues: MKTMLAAYLPGNSTVDLREVAVPTPGINQVLIKMKSSGICGSDVHYIYHQHRATAAAPDKPLYQGFINGHEPCGQIVAMGQGCRHFKEGDRVLVYHISGCGFCPNCRRGFPISCTGEGKAAYGWQRDGGHAEYLLAEEKDLILLPDALSYEDGAFISCGVGTAYEGILRGEVSGSDNVLVVGLGPVGMMAMMLAKGRGAKRIIGVDMLPERLAMAKQLGVMDHGYLATTEGLPQIIAELTHGGADVALDCSGNAAGRLLALQSTADWGRVVYIGETGKVEFEVSADLMHHQRRIIGSWVTSLFHMEKCAHDLTDWKLWPRNAITHRFSLEQAGDAYALMASGKCGKVVINFPD.

Positions 40, 70, 100, 103, 106, 114, and 158 each coordinate Zn(2+).

The protein belongs to the zinc-containing alcohol dehydrogenase family. Zn(2+) is required as a cofactor.

This is an uncharacterized protein from Escherichia coli (strain K12).